A 284-amino-acid chain; its full sequence is Acetylglutamate kinase (284 aa).

Substrate is bound by residues 64 to 65, arginine 86, and asparagine 177; that span reads GG.

It belongs to the acetylglutamate kinase family. ArgB subfamily.

The protein resides in the cytoplasm. It catalyses the reaction N-acetyl-L-glutamate + ATP = N-acetyl-L-glutamyl 5-phosphate + ADP. It participates in amino-acid biosynthesis; L-arginine biosynthesis; N(2)-acetyl-L-ornithine from L-glutamate: step 2/4. Its function is as follows. Catalyzes the ATP-dependent phosphorylation of N-acetyl-L-glutamate. The chain is Acetylglutamate kinase from Haemophilus ducreyi (strain 35000HP / ATCC 700724).